The sequence spans 166 residues: 3-hydroxyacyl-[acyl-carrier-protein] dehydratase FabZ (166 aa).

Residue H72 is part of the active site.

The protein belongs to the thioester dehydratase family. FabZ subfamily.

Its subcellular location is the cytoplasm. It carries out the reaction a (3R)-hydroxyacyl-[ACP] = a (2E)-enoyl-[ACP] + H2O. Its function is as follows. Involved in unsaturated fatty acids biosynthesis. Catalyzes the dehydration of short chain beta-hydroxyacyl-ACPs and long chain saturated and unsaturated beta-hydroxyacyl-ACPs. In Synechococcus sp. (strain JA-2-3B'a(2-13)) (Cyanobacteria bacterium Yellowstone B-Prime), this protein is 3-hydroxyacyl-[acyl-carrier-protein] dehydratase FabZ.